The following is a 738-amino-acid chain: Zinc finger protein 235 (738 aa).

The KRAB domain maps to 8-79 (VTFKDVAVAF…ELQTQRGKHS (72 aa)). The C2H2-type 1; degenerate zinc-finger motif lies at 263-285 (YQGNECEEAFNDSSSLELHKQVH). C2H2-type zinc fingers lie at residues 319–341 (YWCH…QRVH), 347–369 (YTCH…LPIH), 375–397 (YRCD…CRVH), 403–425 (YKCE…ERIH), 431–453 (YKCG…QRVH), 459–481 (YKCD…QRVH), 487–509 (YKCE…QRVH), 515–537 (FRCN…QRVH), 543–565 (YKCE…QRVH), 571–593 (YKCE…QSVH), 599–621 (FKCD…QRVH), 627–649 (YKCD…QIIH), 655–677 (FKCE…QRVH), 683–705 (YTCQ…QRVH), and 711–733 (YICD…QRVH).

Belongs to the krueppel C2H2-type zinc-finger protein family.

Its subcellular location is the nucleus. Functionally, may be involved in transcriptional regulation. The protein is Zinc finger protein 235 (ZNF235) of Homo sapiens (Human).